Consider the following 248-residue polypeptide: 1-(5-phosphoribosyl)-5-[(5-phosphoribosylamino)methylideneamino] imidazole-4-carboxamide isomerase (248 aa).

The active-site Proton acceptor is Asp8. Asp131 functions as the Proton donor in the catalytic mechanism.

Belongs to the HisA/HisF family.

The protein resides in the cytoplasm. The catalysed reaction is 1-(5-phospho-beta-D-ribosyl)-5-[(5-phospho-beta-D-ribosylamino)methylideneamino]imidazole-4-carboxamide = 5-[(5-phospho-1-deoxy-D-ribulos-1-ylimino)methylamino]-1-(5-phospho-beta-D-ribosyl)imidazole-4-carboxamide. It participates in amino-acid biosynthesis; L-histidine biosynthesis; L-histidine from 5-phospho-alpha-D-ribose 1-diphosphate: step 4/9. The chain is 1-(5-phosphoribosyl)-5-[(5-phosphoribosylamino)methylideneamino] imidazole-4-carboxamide isomerase from Nitrosomonas eutropha (strain DSM 101675 / C91 / Nm57).